Here is a 388-residue protein sequence, read N- to C-terminus: Succinate--CoA ligase [ADP-forming] subunit beta (388 aa).

The region spanning 9–244 (KQLFAEYGLP…PSQEDEREAH (236 aa)) is the ATP-grasp domain. Residues lysine 46, 53 to 55 (GRG), glutamate 99, threonine 102, and glutamate 107 contribute to the ATP site. Asparagine 199 and aspartate 213 together coordinate Mg(2+). Substrate is bound by residues asparagine 264 and 321–323 (GIV).

It belongs to the succinate/malate CoA ligase beta subunit family. As to quaternary structure, heterotetramer of two alpha and two beta subunits. Requires Mg(2+) as cofactor.

It catalyses the reaction succinate + ATP + CoA = succinyl-CoA + ADP + phosphate. The catalysed reaction is GTP + succinate + CoA = succinyl-CoA + GDP + phosphate. The protein operates within carbohydrate metabolism; tricarboxylic acid cycle; succinate from succinyl-CoA (ligase route): step 1/1. In terms of biological role, succinyl-CoA synthetase functions in the citric acid cycle (TCA), coupling the hydrolysis of succinyl-CoA to the synthesis of either ATP or GTP and thus represents the only step of substrate-level phosphorylation in the TCA. The beta subunit provides nucleotide specificity of the enzyme and binds the substrate succinate, while the binding sites for coenzyme A and phosphate are found in the alpha subunit. The protein is Succinate--CoA ligase [ADP-forming] subunit beta of Saccharophagus degradans (strain 2-40 / ATCC 43961 / DSM 17024).